The sequence spans 103 residues: uncharacterized protein (103 aa).

The next 3 membrane-spanning stretches (helical) occupy residues 12 to 34 (GFSW…LTIS), 49 to 66 (TLMS…ALIA), and 79 to 101 (FARG…VAGG).

Its subcellular location is the cell membrane. This is an uncharacterized protein from Pasteurella multocida (strain Pm70).